A 131-amino-acid polypeptide reads, in one-letter code: CDGSH iron-sulfur domain-containing protein 2 homolog A (131 aa).

The Lumenal segment spans residues 1–35 (MEFLSKIVRVHIPDYLNSVPVPDSFGGFLDLTAGQ). Residues 36-58 (WLHLFAFSGTVAAAVYMSVKPYL) traverse the membrane as a helical segment. Over 59–131 (DKKDQKDQLV…GPLVLKRKDV (73 aa)) the chain is Cytoplasmic. Cysteine 95, cysteine 97, cysteine 106, and histidine 110 together coordinate [2Fe-2S] cluster.

Belongs to the CISD protein family. CISD2 subfamily. [2Fe-2S] cluster serves as cofactor.

It is found in the endoplasmic reticulum membrane. The chain is CDGSH iron-sulfur domain-containing protein 2 homolog A from Branchiostoma floridae (Florida lancelet).